Consider the following 201-residue polypeptide: Single-stranded DNA-binding protein, mitochondrial (201 aa).

The SSB domain maps to 71 to 184; that stretch reads VHRAIICGKV…RDGKIRMIKY (114 aa).

The protein resides in the mitochondrion. Its function is as follows. Binds to ss-DNA. In Arabidopsis thaliana (Mouse-ear cress), this protein is Single-stranded DNA-binding protein, mitochondrial.